The primary structure comprises 472 residues: N(6)-adenine-specific methyltransferase METTL4 (472 aa).

The protein belongs to the MT-A70-like family.

It is found in the nucleus. Its subcellular location is the cytoplasm. The protein localises to the cytosol. It localises to the mitochondrion matrix. The enzyme catalyses a 2'-O-methyladenosine in U2 snRNA + S-adenosyl-L-methionine = an N(6)-methyl-2'-O-methyladenosine in U2 snRNA + S-adenosyl-L-homocysteine + H(+). The catalysed reaction is a 2'-deoxyadenosine in DNA + S-adenosyl-L-methionine = an N(6)-methyl-2'-deoxyadenosine in DNA + S-adenosyl-L-homocysteine + H(+). Functionally, n(6)-adenine-specific methyltransferase that can methylate both RNAs and DNA. Acts as a N(6)-adenine-specific RNA methyltransferase by catalyzing formation of N6,2'-O-dimethyladenosine (m6A(m)) on internal positions of U2 small nuclear RNA (snRNA): methylates the 6th position of adenine residues with a pre-deposited 2'-O-methylation. Internal m6A(m) methylation of snRNAs regulates RNA splicing. Also able to act as a N(6)-adenine-specific DNA methyltransferase by mediating methylation of DNA on the 6th position of adenine (N(6)-methyladenosine). The existence of N(6)-methyladenosine (m6A) on DNA is however unclear in mammals, and additional evidences are required to confirm the role of the N(6)-adenine-specific DNA methyltransferase activity of METTL4 in vivo. Acts as a regulator of mitochondrial transcript levels and mitochondrial DNA (mtDNA) copy number by mediating mtDNA N(6)-methylation: m6A on mtDNA reduces transcription by repressing TFAM DNA-binding and bending. N(6)-methyladenosine deposition by METTL4 regulates Polycomb silencing by triggering ubiquitination and degradation of sensor proteins ASXL1 and MPND, leading to inactivation of the PR-DUB complex and subsequent preservation of Polycomb silencing. This is N(6)-adenine-specific methyltransferase METTL4 from Homo sapiens (Human).